Reading from the N-terminus, the 275-residue chain is NH(3)-dependent NAD(+) synthetase (275 aa).

Position 46–53 (46–53) interacts with ATP; sequence GISGGQDS. Asp52 lines the Mg(2+) pocket. Arg140 contacts deamido-NAD(+). Thr160 provides a ligand contact to ATP. Mg(2+) is bound at residue Glu165. Lys173 and Asp180 together coordinate deamido-NAD(+). 2 residues coordinate ATP: Lys189 and Thr211. 260 to 261 lines the deamido-NAD(+) pocket; it reads HK.

Belongs to the NAD synthetase family. In terms of assembly, homodimer.

It carries out the reaction deamido-NAD(+) + NH4(+) + ATP = AMP + diphosphate + NAD(+) + H(+). The protein operates within cofactor biosynthesis; NAD(+) biosynthesis; NAD(+) from deamido-NAD(+) (ammonia route): step 1/1. Functionally, catalyzes the ATP-dependent amidation of deamido-NAD to form NAD. Uses ammonia as a nitrogen source. This chain is NH(3)-dependent NAD(+) synthetase, found in Salmonella arizonae (strain ATCC BAA-731 / CDC346-86 / RSK2980).